The following is a 111-amino-acid chain: Protein BEX3 (111 aa).

The interval 1-63 (MANIHQENEE…RQINDGMGGD (63 aa)) is disordered. Residues 68-93 (EIFMEEMREIRRKLRELQLRNCLRIL) form an interaction with p75NTR/NGFR region. Residues 68-111 (EIFMEEMREIRRKLRELQLRNCLRILMGELSNHHDHHDEFCLMP) form an interaction with 14-3-3 epsilon region. The Nuclear export signal motif lies at 77–87 (IRRKLRELQLR). The segment at 100 to 104 (HHDHH) is his cluster. A Zn(2+)-binding site is contributed by C108.

It belongs to the BEX family. Self-associates. Binds to the DEATH domain of p75NTR/NGFR. Interacts with 14-3-3 epsilon (YWHAE). Interacts with DIABLO/SMAC. Post-translationally, ubiquitinated. Degraded by the proteasome. As to expression, found in ovarian granulosa cells, testis, prostate and seminal vesicle tissue. High levels also detected in liver.

It is found in the nucleus. It localises to the cytoplasm. The protein resides in the cytosol. Its function is as follows. May be a signaling adapter molecule involved in NGFR/p75NTR-mediated apoptosis induced by NGF. Plays a role in zinc-triggered neuronal death. In absence of reductive stress, acts as a pseudosubstrate for the CRL2(FEM1B) complex: associates with FEM1B via zinc, thereby preventing association between FEM1B and its substrates. This is Protein BEX3 from Homo sapiens (Human).